Reading from the N-terminus, the 339-residue chain is Paired box protein Pax-9 (339 aa).

The segment at residues 2–128 (AFGEVNQLGG…SSISRILRNK (127 aa)) is a DNA-binding region (paired). Residues 5–61 (EVNQLGGVFVNGRPLPNAIRLRIVELAQLGIRPCDISRQLRVSHGCVSKILARYNET) form a PAI subdomain region. Residues 80-128 (TVVKHIRTYKQRDPGIFAWEIRDRLLADGVCDKYNVPSVSSISRILRNK) are RED subdomain.

The protein resides in the nucleus. The polypeptide is Paired box protein Pax-9 (PAX9) (Gallus gallus (Chicken)).